An 890-amino-acid chain; its full sequence is DNA mismatch repair protein MutS (890 aa).

An ATP-binding site is contributed by 646-653 (GPNMAGKS).

This sequence belongs to the DNA mismatch repair MutS family.

Functionally, this protein is involved in the repair of mismatches in DNA. It is possible that it carries out the mismatch recognition step. This protein has a weak ATPase activity. This Hyphomonas neptunium (strain ATCC 15444) protein is DNA mismatch repair protein MutS.